Here is a 485-residue protein sequence, read N- to C-terminus: Cobyric acid synthase (485 aa).

A GATase cobBQ-type domain is found at 252-439; it reads KVRIAVPILP…VHGLFGDDRQ (188 aa). Cys334 serves as the catalytic Nucleophile. Residue His431 is part of the active site.

The protein belongs to the CobB/CobQ family. CobQ subfamily.

Its pathway is cofactor biosynthesis; adenosylcobalamin biosynthesis. In terms of biological role, catalyzes amidations at positions B, D, E, and G on adenosylcobyrinic A,C-diamide. NH(2) groups are provided by glutamine, and one molecule of ATP is hydrogenolyzed for each amidation. The chain is Cobyric acid synthase from Azorhizobium caulinodans (strain ATCC 43989 / DSM 5975 / JCM 20966 / LMG 6465 / NBRC 14845 / NCIMB 13405 / ORS 571).